The primary structure comprises 62 residues: Toxin Tb2-II (62 aa).

The 62-residue stretch at 1 to 62 folds into the LCN-type CS-alpha/beta domain; sequence KEGYAMDHEG…KVWDYATNKC (62 aa). 4 disulfides stabilise this stretch: cysteine 11-cysteine 62, cysteine 15-cysteine 38, cysteine 23-cysteine 43, and cysteine 27-cysteine 45.

Belongs to the long (4 C-C) scorpion toxin superfamily. Sodium channel inhibitor family. Beta subfamily. In terms of tissue distribution, expressed by the venom gland.

Its subcellular location is the secreted. In terms of biological role, beta toxins bind voltage-independently at site-4 of sodium channels (Nav) and shift the voltage of activation toward more negative potentials thereby affecting sodium channel activation and promoting spontaneous and repetitive firing. This toxin is active against both mammals and insects. The protein is Toxin Tb2-II of Tityus bahiensis (Brazilian scorpion).